The chain runs to 184 residues: Phosphopantetheine adenylyltransferase (184 aa).

Substrate is bound at residue Ser8. ATP-binding positions include 8–9 (SF) and His16. Substrate-binding residues include Lys40, Leu74, and Arg88. Residues 89-91 (GLR), Glu99, and 123-129 (WSFVSST) contribute to the ATP site.

Belongs to the bacterial CoaD family. As to quaternary structure, homohexamer. It depends on Mg(2+) as a cofactor.

The protein localises to the cytoplasm. It carries out the reaction (R)-4'-phosphopantetheine + ATP + H(+) = 3'-dephospho-CoA + diphosphate. It functions in the pathway cofactor biosynthesis; coenzyme A biosynthesis; CoA from (R)-pantothenate: step 4/5. Reversibly transfers an adenylyl group from ATP to 4'-phosphopantetheine, yielding dephospho-CoA (dPCoA) and pyrophosphate. The sequence is that of Phosphopantetheine adenylyltransferase from Deinococcus geothermalis (strain DSM 11300 / CIP 105573 / AG-3a).